Consider the following 644-residue polypeptide: Exoribonuclease 2 (644 aa).

Residues 189 to 516 (RQDLTALNFV…NHRLLKAVIK (328 aa)) form the RNB domain. In terms of domain architecture, S1 motif spans 561 to 643 (NTRFAAEIID…ETRSIIARPA (83 aa)).

The protein belongs to the RNR ribonuclease family. RNase II subfamily.

The protein resides in the cytoplasm. It catalyses the reaction Exonucleolytic cleavage in the 3'- to 5'-direction to yield nucleoside 5'-phosphates.. Its function is as follows. Involved in mRNA degradation. Hydrolyzes single-stranded polyribonucleotides processively in the 3' to 5' direction. The polypeptide is Exoribonuclease 2 (Salmonella paratyphi B (strain ATCC BAA-1250 / SPB7)).